The chain runs to 320 residues: rRNA methyltransferase 2, mitochondrial (320 aa).

The N-terminal 18 residues, 1–18 (MILVYNRIRSIISSSLGR), are a transit peptide targeting the mitochondrion. Residues 83–86 (PGAW), aspartate 104, 178–179 (DI), and aspartate 203 contribute to the S-adenosyl-L-methionine site. Lysine 264 (proton acceptor) is an active-site residue.

The protein belongs to the class I-like SAM-binding methyltransferase superfamily. RNA methyltransferase RlmE family.

The protein localises to the mitochondrion. It catalyses the reaction uridine(2791) in 21S rRNA + S-adenosyl-L-methionine = 2'-O-methyluridine(2791) in 21S rRNA + S-adenosyl-L-homocysteine + H(+). In terms of biological role, S-adenosyl-L-methionine-dependent 2'-O-ribose methyltransferase that catalyzes the formation of 2'-O-methyluridine at position 2791 (Um2791) in the 21S mitochondrial large subunit ribosomal RNA (mtLSU rRNA), a universally conserved modification in the peptidyl transferase domain of the mtLSU rRNA. This chain is rRNA methyltransferase 2, mitochondrial, found in Saccharomyces cerevisiae (strain ATCC 204508 / S288c) (Baker's yeast).